A 373-amino-acid polypeptide reads, in one-letter code: 4-hydroxy-3-methylbut-2-en-1-yl diphosphate synthase (flavodoxin) (373 aa).

Residues cysteine 270, cysteine 273, cysteine 305, and glutamate 312 each coordinate [4Fe-4S] cluster.

The protein belongs to the IspG family. Requires [4Fe-4S] cluster as cofactor.

The enzyme catalyses (2E)-4-hydroxy-3-methylbut-2-enyl diphosphate + oxidized [flavodoxin] + H2O + 2 H(+) = 2-C-methyl-D-erythritol 2,4-cyclic diphosphate + reduced [flavodoxin]. The protein operates within isoprenoid biosynthesis; isopentenyl diphosphate biosynthesis via DXP pathway; isopentenyl diphosphate from 1-deoxy-D-xylulose 5-phosphate: step 5/6. In terms of biological role, converts 2C-methyl-D-erythritol 2,4-cyclodiphosphate (ME-2,4cPP) into 1-hydroxy-2-methyl-2-(E)-butenyl 4-diphosphate. The polypeptide is 4-hydroxy-3-methylbut-2-en-1-yl diphosphate synthase (flavodoxin) (Klebsiella pneumoniae (strain 342)).